We begin with the raw amino-acid sequence, 115 residues long: Large ribosomal subunit protein bL19 (115 aa).

Belongs to the bacterial ribosomal protein bL19 family.

This protein is located at the 30S-50S ribosomal subunit interface and may play a role in the structure and function of the aminoacyl-tRNA binding site. The chain is Large ribosomal subunit protein bL19 from Francisella tularensis subsp. tularensis (strain FSC 198).